We begin with the raw amino-acid sequence, 24 residues long: Hemocyanin subunit 4e (24 aa).

The protein belongs to the tyrosinase family. Hemocyanin subfamily. As to expression, hemolymph.

It localises to the secreted. Its subcellular location is the extracellular space. In terms of biological role, hemocyanins are copper-containing oxygen carriers occurring freely dissolved in the hemolymph of many mollusks and arthropods. This chain is Hemocyanin subunit 4e, found in Maja squinado (Mediterranean spider crab).